Reading from the N-terminus, the 513-residue chain is Maturase K (513 aa).

It belongs to the intron maturase 2 family. MatK subfamily.

Its subcellular location is the plastid. The protein resides in the chloroplast. Its function is as follows. Usually encoded in the trnK tRNA gene intron. Probably assists in splicing its own and other chloroplast group II introns. The sequence is that of Maturase K from Sporobolus indicus (Smut grass).